A 3567-amino-acid chain; its full sequence is Zinc finger homeobox protein 4 (3567 aa).

Met-1 is subject to N-acetylmethionine. 4 disordered regions span residues 1–54 (METC…LKTD), 425–480 (LSHS…AYSN), 522–545 (TSSS…VRAS), and 565–611 (SKDS…SPGS). Over residues 9–28 (ISRQENGQSTSKLCGTTQLD) the composition is skewed to polar residues. Basic and acidic residues-rich tracts occupy residues 39–54 (EPDR…LKTD) and 434–452 (KMSE…KESN). The span at 468 to 480 (EPGDEDEEDAYSN) shows a compositional bias: acidic residues. 3 consecutive C2H2-type zinc fingers follow at residues 613–636 (IECP…TMMH), 644–667 (LKCP…KEKH), and 699–723 (FRCE…SDKH). The C2H2-type 4; degenerate zinc-finger motif lies at 767–789 (WRCEVCDYETNVARNLRIHMTSE). 3 C2H2-type zinc fingers span residues 917 to 941 (YQCK…TDKH), 973 to 995 (LKCN…TTNH), and 1021 to 1045 (YYCA…SVKH). The segment at 1098-1160 (EQHEEAEGAI…EDVATKRSKP (63 aa)) is disordered. 2 stretches are compositionally biased toward basic and acidic residues: residues 1120-1132 (TSER…KNSN) and 1148-1160 (AKEE…RSKP). A Glycyl lysine isopeptide (Lys-Gly) (interchain with G-Cter in SUMO2) cross-link involves residue Lys-1149. 2 consecutive C2H2-type zinc fingers follow at residues 1172–1195 (YQCP…LSQH) and 1201–1224 (ICCP…THLH). Residues 1254–1324 (AASEKSERDT…WNKNSSKDVK (71 aa)) are disordered. Over residues 1281–1310 (MDDKSMAGLEDSKANVEVKNEEQKPTKEPL) the composition is skewed to basic and acidic residues. Glycyl lysine isopeptide (Lys-Gly) (interchain with G-Cter in SUMO2) cross-links involve residues Lys-1299 and Lys-1324. 2 C2H2-type zinc fingers span residues 1352-1374 (YRCN…SQYH) and 1380-1403 (TMCN…EAGH). The disordered stretch occupies residues 1429-1480 (ETMSQDDHGLEQEMEREYEVDHEGKASPVGSDSSSIPDDMGSEPKRTLPFRK). The segment covering 1433–1453 (QDDHGLEQEMEREYEVDHEGK) has biased composition (basic and acidic residues). The C2H2-type 12 zinc-finger motif lies at 1496–1522 (YKCTVCKESFTQKNILLVHYNSVSHLH). A Glycyl lysine isopeptide (Lys-Gly) (interchain with G-Cter in SUMO2) cross-link involves residue Lys-1546. A C2H2-type 13 zinc finger spans residues 1548–1572 (YKCSICNVAYSQSSTLEIHMRSVLH). Low complexity-rich tracts occupy residues 1761-1772 (TQPQLQPQKQQQ) and 1779-1791 (QQQQ…LLKQ). 2 disordered regions span residues 1761 to 1791 (TQPQ…LLKQ) and 1809 to 1858 (SYKE…IASG). Residue Lys-1790 forms a Glycyl lysine isopeptide (Lys-Gly) (interchain with G-Cter in SUMO2) linkage. Residues 1809–1845 (SYKEAEDISEKPEKPKQEFISEGEGLKEGKDTKKQKS) are compositionally biased toward basic and acidic residues. A C2H2-type 14 zinc finger spans residues 1901–1924 (LECGTCGKLFSNVLILKSHQEHVH). The tract at residues 1948–2024 (YPISPSSPET…PPSAPPQVQL (77 aa)) is disordered. Pro residues-rich tracts occupy residues 1955-1974 (PETP…PPQP) and 1991-2019 (QAPP…PSAP). 2 consecutive DNA-binding regions (homeobox) follow at residues 2084 to 2143 (FKRP…RQRN) and 2181 to 2240 (KRSS…RKSY). The C2H2-type 15; degenerate zinc-finger motif lies at 2267–2291 (YQCKKCNVVFPRIFDLITHQKKQCY). Disordered stretches follow at residues 2289–2311 (QCYK…MDAT) and 2328–2431 (AKNA…SPLQ). Over residues 2293–2309 (DEDDDAQDESQTEDSMD) the composition is skewed to acidic residues. The segment covering 2331–2345 (AAAPAASSGSGTSTP) has biased composition (low complexity). The span at 2352–2370 (PEPEKTSPKPEYPAEKPKQ) shows a compositional bias: basic and acidic residues. The span at 2419-2431 (SASQTPVPSSPLQ) shows a compositional bias: polar residues. A C2H2-type 16 zinc finger spans residues 2448–2470 (YQCDQCTVAFPTLELWQEHQHMH). Positions 2507–2530 (LGSSLTQMPPQASSSHTTAPTTVA) are enriched in polar residues. Residues 2507-2564 (LGSSLTQMPPQASSSHTTAPTTVAASLKRKLDDKEDNNCSEKEGGNSGEDQHRDKRLR) form a disordered region. The span at 2535–2559 (RKLDDKEDNNCSEKEGGNSGEDQHR) shows a compositional bias: basic and acidic residues. The homeobox 3 DNA-binding region spans 2560–2619 (DKRLRTTITPEQLEILYEKYLLDSNPTRKMLDHIAREVGLKKRVVQVWFQNTRARERKGQ). The segment at 2630–2653 (KRCPFCRALFKAKSALESHIRSRH) adopts a C2H2-type 17 zinc-finger fold. Ser-2663 bears the Phosphoserine mark. Residues 2764–2785 (AISDATTGDEGNTEMESTTGSS) are compositionally biased toward polar residues. Disordered regions lie at residues 2764–2811 (AISD…TTPT) and 2829–2885 (HFND…PGHK). Residues 2830–2839 (FNDKDGDHDQ) are compositionally biased toward basic and acidic residues. Over residues 2862-2874 (PSSPNPFGSSNPF) the composition is skewed to low complexity. The segment at residues 2884-2943 (HKRFRTQMSNLQLKVLKACFSDYRTPTMQECEMLGNEIGLPKRVVQVWFQNARAKEKKFK) is a DNA-binding region (homeobox 4). The segment at 2962–2986 (PECTLCGVKYSARLSIRDHIFSKQH) adopts a C2H2-type 18 zinc-finger fold. Positions 3092–3110 (SATSSPALSLSSAPTKPLL) are enriched in low complexity. Disordered regions lie at residues 3092–3172 (SATS…KEEK) and 3281–3337 (LQKQ…LESK). Over residues 3111-3125 (QTPPPPPPPPPPPPS) the composition is skewed to pro residues. Polar residues predominate over residues 3126–3135 (SSLSGQQTEQ). The segment covering 3153-3172 (IKEEELEATKPEKHPKKEEK) has biased composition (basic and acidic residues). A Glycyl lysine isopeptide (Lys-Gly) (interchain with G-Cter in SUMO2) cross-link involves residue Lys-3154. The stretch at 3265 to 3294 (ALLQQYQQYQQNLQESLQKQQKQQQEQQQK) forms a coiled coil. Residues 3281–3293 (LQKQQKQQQEQQQ) show a composition bias toward low complexity. Residues 3294 to 3314 (KPVQAKTSKVESDQPQNSNDA) show a composition bias toward polar residues. Residues 3315–3337 (SETKEDKSTATESTKEEPQLESK) show a composition bias toward basic and acidic residues. Residues 3354–3378 (FICRKCQMMFTDEDAAVNHQKSFCY) form a C2H2-type 19; degenerate zinc finger. The C2H2-type 20 zinc finger occupies 3398–3422 (YQCLACDVAISGNEALSQHLQSSLH). Disordered regions lie at residues 3443-3462 (HSVC…AASS) and 3511-3534 (STSG…ELSQ). Over residues 3447-3462 (SPNPNTTSTSQSAASS) the composition is skewed to low complexity.

Belongs to the krueppel C2H2-type zinc-finger protein family. Expressed in brain, skeletal muscle and liver. Very low expression in stomach.

It is found in the nucleus. Functionally, may play a role in neural and muscle differentiation. May be involved in transcriptional regulation. The polypeptide is Zinc finger homeobox protein 4 (ZFHX4) (Homo sapiens (Human)).